A 276-amino-acid polypeptide reads, in one-letter code: uncharacterized protein (276 aa).

Residues 1–19 form the signal peptide; that stretch reads MKKWLICSFVLVLLVSFTA. Cys20 carries the N-palmitoyl cysteine lipid modification. A lipid anchor (S-diacylglycerol cysteine) is attached at Cys20.

Belongs to the NlpA lipoprotein family.

The protein localises to the cell membrane. This is an uncharacterized protein from Bacillus subtilis (strain 168).